Consider the following 477-residue polypeptide: 3-succinoylsemialdehyde-pyridine dehydrogenase (477 aa).

202–208 (GDGPGVG) is an NAD(+) binding site. Residues E246 and C280 contribute to the active site.

It belongs to the aldehyde dehydrogenase family.

The enzyme catalyses 4-oxo-4-(pyridin-3-yl)butanal + NADP(+) + H2O = 4-oxo-4-(pyridin-3-yl)butanoate + NADPH + 2 H(+). The protein operates within alkaloid degradation; nicotine degradation. In terms of biological role, catalyzes the dehydrogenation of 3-succinoylsemialdehyde-pyridine to 3-succinoyl-pyridine in the nicotine degradation pathway. The chain is 3-succinoylsemialdehyde-pyridine dehydrogenase (ald) from Pseudomonas sp.